The sequence spans 193 residues: Ribonuclease HII (193 aa).

The region spanning 15 to 193 is the RNase H type-2 domain; that stretch reads CIVAGIDEAG…PYHRRSFRCC (179 aa). Positions 21, 22, and 112 each coordinate a divalent metal cation.

Belongs to the RNase HII family. The cofactor is Mn(2+). Requires Mg(2+) as cofactor.

It localises to the cytoplasm. It carries out the reaction Endonucleolytic cleavage to 5'-phosphomonoester.. In terms of biological role, endonuclease that specifically degrades the RNA of RNA-DNA hybrids. This is Ribonuclease HII from Rickettsia rickettsii (strain Iowa).